The primary structure comprises 304 residues: D-tagatose-1-phosphate kinase (304 aa).

Aspartate 250 (proton acceptor) is an active-site residue.

This sequence belongs to the carbohydrate kinase PfkB family. It depends on Mg(2+) as a cofactor.

The enzyme catalyses alpha-D-tagatopyranose 1-phosphate + ATP = D-tagatofuranose 1,6-bisphosphate + ADP + H(+). The protein operates within carbohydrate degradation. Its function is as follows. Kinase involved in a D-tagatose catabolic pathway. Catalyzes the phosphorylation of D-tagatose-1-phosphate (Tag-1P) to D-tagatose-1,6-bisphosphate. In Klebsiella oxytoca, this protein is D-tagatose-1-phosphate kinase.